A 219-amino-acid chain; its full sequence is Probable nicotinate-nucleotide adenylyltransferase (219 aa).

This sequence belongs to the NadD family.

It carries out the reaction nicotinate beta-D-ribonucleotide + ATP + H(+) = deamido-NAD(+) + diphosphate. The protein operates within cofactor biosynthesis; NAD(+) biosynthesis; deamido-NAD(+) from nicotinate D-ribonucleotide: step 1/1. In terms of biological role, catalyzes the reversible adenylation of nicotinate mononucleotide (NaMN) to nicotinic acid adenine dinucleotide (NaAD). This chain is Probable nicotinate-nucleotide adenylyltransferase, found in Hahella chejuensis (strain KCTC 2396).